Here is a 335-residue protein sequence, read N- to C-terminus: Zinc finger protein CO3 (335 aa).

The Zn(2+) site is built by C15, C18, C38, and H43. The segment at 15–57 (CDSCRSAPCAFYCLADSAALCATCDADVHSVNPLARRHRRVPM) adopts a B box-type; atypical zinc-finger fold. The segment at 141-179 (AGEKEDASSSKDCSSSHGKSSEGSHEFAVPGEPVPERQG) is disordered. Residues 268 to 310 (REARVHRYREKRKTRRFEKTIRYASRKAYAETRPRIKGRFAKR) enclose the CCT domain.

The protein belongs to the CONSTANS family.

The protein resides in the nucleus. Functionally, probable transcription factor involved in the regulation of flowering time under short day (SD) conditions. Functions as a repressor of flowering under SD conditions, independently of HD1, EHD1, MADS50 and MADS51. Controls flowering time under SD conditions by negatively regulating the expression of HD3A and FTL. The sequence is that of Zinc finger protein CO3 from Oryza sativa subsp. japonica (Rice).